The chain runs to 341 residues: Eukaryotic translation initiation factor 3 subunit I (341 aa).

WD repeat units follow at residues 8-49 (GHER…GTYR), 50-91 (GHQG…KTWD), 135-184 (QSDE…LLYN), 189-228 (ELNQPITDLQWSQDRTYFITASKDKTSKLISSKDLEVLKS), and 286-325 (GHFGPLNTVAADPTGKGYASGGEDGYVRVHAFDKGYYDFL).

Belongs to the eIF-3 subunit I family. In terms of assembly, component of the eukaryotic translation initiation factor 3 (eIF-3) complex.

It is found in the cytoplasm. Its function is as follows. Component of the eukaryotic translation initiation factor 3 (eIF-3) complex, which is involved in protein synthesis of a specialized repertoire of mRNAs and, together with other initiation factors, stimulates binding of mRNA and methionyl-tRNAi to the 40S ribosome. The eIF-3 complex specifically targets and initiates translation of a subset of mRNAs involved in cell proliferation. This is Eukaryotic translation initiation factor 3 subunit I from Chaetomium globosum (strain ATCC 6205 / CBS 148.51 / DSM 1962 / NBRC 6347 / NRRL 1970) (Soil fungus).